Consider the following 104-residue polypeptide: NADH dehydrogenase [ubiquinone] 1 alpha subcomplex subunit 8 (104 aa).

CHCH domains lie at 17–59 (WAVC…MREI) and 60–102 (VKNC…VAPK). 4 consecutive short sequence motifs (cx9C motif) follow at residues 20–30 (CGEVFEAYEKC), 41–51 (CLRESTAVVGC), 63–73 (CQKELNESVKC), and 84–94 (CEEENKAFNEC). Disulfide bonds link cysteine 20-cysteine 51, cysteine 30-cysteine 41, cysteine 63-cysteine 94, and cysteine 73-cysteine 84.

The protein belongs to the complex I NDUFA8 subunit family. As to quaternary structure, complex I is composed of about 45 different subunits.

Its subcellular location is the mitochondrion inner membrane. The protein localises to the mitochondrion intermembrane space. Its function is as follows. Accessory subunit of the mitochondrial membrane respiratory chain NADH dehydrogenase (Complex I), that is believed not to be involved in catalysis. Complex I functions in the transfer of electrons from NADH to the respiratory chain. The immediate electron acceptor for the enzyme is believed to be ubiquinone. The protein is NADH dehydrogenase [ubiquinone] 1 alpha subcomplex subunit 8 (ndufa8) of Dictyostelium discoideum (Social amoeba).